We begin with the raw amino-acid sequence, 684 residues long: NAD(P)H-quinone oxidoreductase subunit 5, chloroplastic (684 aa).

14 helical membrane-spanning segments follow: residues 16–36 (WAFPSILLLSIVMIFSTXLSI), 65–85 (IDPLTSIMSMLXTTVGIMVLI), 96–116 (GYLIFFAYMSFFSTSMLGLVT), 123–143 (IYIFWELVGMCSYLLIGFWFT), 161–181 (GDFGLLLGILGFYWITGSFEF), 206–226 (AALLFAGAVAKSAQFPLHVWL), 234–254 (TPISALIHAATMVAAGIFLVA), 256–276 (LLPLFIVIPYIMNFISLIGII), 303–323 (LXYMMLALGMGSYRSALFHLI), 330–350 (ALLFLGSGSVIHSMETIVGYS), 372–392 (TSFLLGTLSLCGIPPLACFWS), 401–421 (WLYSPIFAIIAWATAGLTAFY), 524–544 (LFPLLVLVLFTLFVGILGIPF), and 583–603 (IFSVSIASFGIFLASXLYKPI).

It belongs to the complex I subunit 5 family. In terms of assembly, NDH is composed of at least 16 different subunits, 5 of which are encoded in the nucleus.

The protein localises to the plastid. The protein resides in the chloroplast thylakoid membrane. It carries out the reaction a plastoquinone + NADH + (n+1) H(+)(in) = a plastoquinol + NAD(+) + n H(+)(out). It catalyses the reaction a plastoquinone + NADPH + (n+1) H(+)(in) = a plastoquinol + NADP(+) + n H(+)(out). Functionally, NDH shuttles electrons from NAD(P)H:plastoquinone, via FMN and iron-sulfur (Fe-S) centers, to quinones in the photosynthetic chain and possibly in a chloroplast respiratory chain. The immediate electron acceptor for the enzyme in this species is believed to be plastoquinone. Couples the redox reaction to proton translocation, and thus conserves the redox energy in a proton gradient. This Sesamum indicum (Oriental sesame) protein is NAD(P)H-quinone oxidoreductase subunit 5, chloroplastic (ndhF).